The sequence spans 239 residues: Ribonuclease 3 (239 aa).

Residues 11-133 (HAAIQKKLGY…MFAAVSFDAD (123 aa)) form the RNase III domain. E46 is a Mg(2+) binding site. D50 is an active-site residue. Mg(2+)-binding residues include D119 and E122. The DRBM domain occupies 160-230 (DGKTALQEAL…AKEALKWLEE (71 aa)).

It belongs to the ribonuclease III family. As to quaternary structure, homodimer. Mg(2+) serves as cofactor.

Its subcellular location is the cytoplasm. It catalyses the reaction Endonucleolytic cleavage to 5'-phosphomonoester.. Its function is as follows. Digests double-stranded RNA. Involved in the processing of primary rRNA transcript to yield the immediate precursors to the large and small rRNAs (23S and 16S). Also processes some mRNAs, and tRNAs when they are encoded in the rRNA operon. CRISPR (clustered regularly interspaced short palindromic repeat) is an adaptive immune system that provides protection against mobile genetic elements (viruses, transposable elements and conjugative plasmids). CRISPR clusters contain spacers, sequences complementary to antecedent mobile elements, and target invading nucleic acids. CRISPR clusters are transcribed and processed into CRISPR RNA (crRNA). In this organism endogenous ribonuclease 3 and Cas9 are required for correct coprocessing of pre-crRNA and the trans-encoded small RNA (tracrRNA). Cas9, crRNA and tracRNA are required for cleavage of invading DNA. Involved in 3'-end processing but not 5'-end processing of crRNA and tracrRNA. This is Ribonuclease 3 from Neisseria meningitidis serogroup C (strain 8013).